A 298-amino-acid chain; its full sequence is Inosose dehydratase (298 aa).

The protein belongs to the IolE/MocC family. It depends on glutathione as a cofactor. The cofactor is Co(2+). Mn(2+) serves as cofactor.

The catalysed reaction is scyllo-inosose = 3D-3,5/4-trihydroxycyclohexane-1,2-dione + H2O. The protein operates within polyol metabolism; myo-inositol degradation into acetyl-CoA; acetyl-CoA from myo-inositol: step 2/7. Catalyzes the dehydration of inosose (2-keto-myo-inositol, 2KMI or 2,4,6/3,5-pentahydroxycyclohexanone) to 3D-(3,5/4)-trihydroxycyclohexane-1,2-dione (D-2,3-diketo-4-deoxy-epi-inositol). This is Inosose dehydratase from Bacillus cereus (strain AH820).